A 78-amino-acid polypeptide reads, in one-letter code: Large ribosomal subunit protein bL28 (78 aa).

The disordered stretch occupies residues 1 to 23; sequence MSRVCQVTGKRPITGNNVSHSKR.

This sequence belongs to the bacterial ribosomal protein bL28 family.

This chain is Large ribosomal subunit protein bL28, found in Marinomonas sp. (strain MWYL1).